The chain runs to 1472 residues: ABC transporter FGM5 (1472 aa).

11 helical membrane-spanning segments follow: residues 32–52, 67–87, 100–120, 163–183, 197–217, 271–291, 316–336, 386–406, 412–432, 493–513, and 534–554; these read IILG…RVAT, FTKL…LILS, FAVA…ALSF, YAGV…LELQ, SPEE…IGIF, ALIV…GFQY, GLIG…ALFW, FHGL…CFLL, LAFI…TAIA, LLIM…VVAF, and LLTN…AAFV. Residues 284–551 enclose the ABC transmembrane type-1 1 domain; it reads IAMIGFQYAQ…MFQSVPAVIA (268 aa). Residues 605-834 enclose the ABC transporter 1 domain; sequence ISIVDGSFGW…GIYIPTLGLS (230 aa). 638 to 645 lines the ATP pocket; the sequence is GPVASGKS. N682, N696, N763, N784, and N843 each carry an N-linked (GlcNAc...) asparagine glycan. 4 consecutive transmembrane segments (helical) span residues 900 to 920, 938 to 958, 1003 to 1023, and 1024 to 1044; these read LLSG…MGWW, LFRG…VIFM, GELP…FAMA, and VVVA…FSII. Residues 900–1139 enclose the ABC transmembrane type-1 2 domain; sequence LLSGIMYAVG…VGVVAISTQL (240 aa). The N-linked (GlcNAc...) asparagine glycan is linked to N1101. Residues 1116-1136 traverse the membrane as a helical segment; it reads FLATFLNLIVMVLAVGVVAIS. One can recognise an ABC transporter 2 domain in the interval 1218-1468; that stretch reads YKNDDESPAS…EGSWFSQLWA (251 aa). Residue 1255–1262 coordinates ATP; that stretch reads GRTGSGKS. Residues N1277 and N1293 are each glycosylated (N-linked (GlcNAc...) asparagine).

The protein belongs to the ABC transporter superfamily. ABCC family. Conjugate transporter (TC 3.A.1.208) subfamily.

It is found in the cell membrane. It participates in secondary metabolite biosynthesis. Functionally, ABC transporter; part of the Fg3_54/C64 gene cluster that mediates the biosynthesis of the octapeptide fusaoctaxin A, a virulence factor that is required for cell-to-cell invasiveness of plant host. The 2 nonribosomal peptide synthetases NRPS9 and NRPS5 form an assembly line which likely utilizes GABA as a starter unit (loaded on the unique module M1 of NRPS9) and sequentially incorporates seven extender units composed of the residues L-Ala, L-allo-Ile, L-Ser, L-Val, L-Ser, L-Leu and L-Leu, respectively. During the process, each of the residues that are tethered on modules M3-M7 of NRPS5 containing an E domain can undergo an epimerization reaction to produce a D-configuration before the transpeptidation reaction occurs. The elongation of the peptidyl chain might be terminated by module M8-mediated L-Leu incorporation, followed by R domain-catalyzed 4 electron reduction to release the resulting octapeptide from the assembly line as an alcohol. Fusaoctaxin A is cleaved by the cluster specific ABC transporter FGM5 to the pentapeptide fusapentaxin A and the tripeptide fusatrixin A. The other enzymes from the cluster, FGM1, FGM2, FGM3 and FGM9 seem not to be involved in the biosynthesis of fusaoctaxin A and their functions have still to be determined. The polypeptide is ABC transporter FGM5 (Gibberella zeae (strain ATCC MYA-4620 / CBS 123657 / FGSC 9075 / NRRL 31084 / PH-1) (Wheat head blight fungus)).